We begin with the raw amino-acid sequence, 253 residues long: Phosphoribosylaminoimidazole-succinocarboxamide synthase (253 aa).

Belongs to the SAICAR synthetase family.

It carries out the reaction 5-amino-1-(5-phospho-D-ribosyl)imidazole-4-carboxylate + L-aspartate + ATP = (2S)-2-[5-amino-1-(5-phospho-beta-D-ribosyl)imidazole-4-carboxamido]succinate + ADP + phosphate + 2 H(+). It functions in the pathway purine metabolism; IMP biosynthesis via de novo pathway; 5-amino-1-(5-phospho-D-ribosyl)imidazole-4-carboxamide from 5-amino-1-(5-phospho-D-ribosyl)imidazole-4-carboxylate: step 1/2. The sequence is that of Phosphoribosylaminoimidazole-succinocarboxamide synthase from Parvibaculum lavamentivorans (strain DS-1 / DSM 13023 / NCIMB 13966).